The primary structure comprises 47 residues: PhoP/PhoQ regulator MgrB (47 aa).

Residues 6 to 26 (WVVLGIVVVVCLLLWAQVFNI) form a helical membrane-spanning segment.

This sequence belongs to the MgrB family. May form homooligomers. Probably interacts with the periplasmic domain of PhoQ.

The protein localises to the cell inner membrane. In terms of biological role, phoP-regulated transcription is redox-sensitive, being activated when the periplasm becomes more reducing. MgrB acts between DsbA/DsbB and PhoP/PhoQ in this pathway. Represses PhoP/PhoQ signaling, possibly by binding to the periplasmic domain of PhoQ, altering its activity and that of downstream effector PhoP. This chain is PhoP/PhoQ regulator MgrB, found in Salmonella gallinarum (strain 287/91 / NCTC 13346).